Consider the following 416-residue polypeptide: Serine carboxypeptidase S10 family member 1 (416 aa).

The signal sequence occupies residues 1 to 20; it reads MMKLLFIIISIIFVINVSNS. 2 N-linked (GlcNAc...) asparagine glycosylation sites follow: N33 and N84. The active site involves S156. N235, N273, and N295 each carry an N-linked (GlcNAc...) asparagine glycan. Residue D338 is part of the active site. N385 carries N-linked (GlcNAc...) asparagine glycosylation. Residue H396 is part of the active site.

The protein belongs to the peptidase S10 family.

It is found in the secreted. In terms of biological role, probable carboxypeptidase. The polypeptide is Serine carboxypeptidase S10 family member 1 (Dictyostelium discoideum (Social amoeba)).